The primary structure comprises 260 residues: Cobalt transport protein CbiM (260 aa).

An N-terminal signal peptide occupies residues 1–34 (MKLGESMKKNATLSVKIIAFLGVLIFTVMPVANA). Helical transmembrane passes span 39-59 (EGYL…PFLI), 77-97 (LLFA…LPSF), 109-129 (LSTI…VLLF), 132-152 (LLLA…MAVM), 175-195 (IFFS…IQLG), and 215-235 (VFAI…VLIF).

It belongs to the CbiM family. As to quaternary structure, forms an energy-coupling factor (ECF) transporter complex composed of an ATP-binding protein (A component, CbiO), a transmembrane protein (T component, CbiQ) and 2 possible substrate-capture proteins (S components, CbiM and CbiN) of unknown stoichimetry.

It localises to the cell membrane. It participates in cofactor biosynthesis; adenosylcobalamin biosynthesis. Functionally, part of the energy-coupling factor (ECF) transporter complex CbiMNOQ involved in cobalt import. The polypeptide is Cobalt transport protein CbiM (Clostridium cellulovorans (strain ATCC 35296 / DSM 3052 / OCM 3 / 743B)).